Consider the following 481-residue polypeptide: (S)-N-methylcoclaurine 3'-hydroxylase isozyme 1 (481 aa).

C423 serves as a coordination point for heme.

Belongs to the cytochrome P450 family. Heme serves as cofactor. As to expression, restricted to the parietal region of sieve elements adjacent or proximal to laticifers in roots, stems, leaves, carpels and hypocotyls.

It localises to the endoplasmic reticulum. The catalysed reaction is (S)-N-methylcoclaurine + reduced [NADPH--hemoprotein reductase] + O2 = (S)-3'-hydroxy-N-methylcoclaurine + oxidized [NADPH--hemoprotein reductase] + H2O + H(+). It participates in alkaloid biosynthesis; (S)-reticuline biosynthesis; (S)-reticuline from (S)-norcoclaurine: step 3/4. Cytochrome P450 monooxygenase involved in the biosynthesis of benzylisoquinoline alkaloids. Catalyzes the 3'-hydroxylation of (S)-N-methylcoclaurine. This is (S)-N-methylcoclaurine 3'-hydroxylase isozyme 1 from Papaver somniferum (Opium poppy).